We begin with the raw amino-acid sequence, 708 residues long: Chaperonin-containing T-complex member BBS12 (708 aa).

Belongs to the TCP-1 chaperonin family. BBS12 subfamily. As to quaternary structure, component of the chaperonin-containing T-complex (TRiC), a heterooligomeric complex of about 850 to 900 kDa that forms two stacked rings, 12 to 16 nm in diameter. Interacts with MKKS.

The protein localises to the cell projection. It is found in the cilium. Functionally, component of the chaperonin-containing T-complex (TRiC), a molecular chaperone complex that assists the folding of proteins upon ATP hydrolysis. As part of the TRiC complex may play a role in the assembly of BBSome, a complex involved in ciliogenesis regulating transports vesicles to the cilia. Involved in adipogenic differentiation. The chain is Chaperonin-containing T-complex member BBS12 (Bbs12) from Mus musculus (Mouse).